Consider the following 1164-residue polypeptide: Receptor-like protein kinase BRI1-like 3 (1164 aa).

An N-terminal signal peptide occupies residues Met-1 to Gly-23. Residues Arg-24–Ser-772 are Extracellular-facing. Residue Asn-32 is glycosylated (N-linked (GlcNAc...) asparagine). Positions Cys-65–Cys-72 match the Cys pair 1 motif. LRR repeat units follow at residues Arg-77–Thr-98, Asn-102–Gly-123, Ser-125–Phe-146, Asn-151–Ser-173, Arg-176–Ala-197, Ser-202–Leu-224, Asn-227–Ser-248, Leu-252–Gly-274, Asn-278–Leu-300, Thr-303–Cys-325, Ser-327–Val-347, Arg-352–Ser-375, Asn-376–Ser-397, Val-403–Lys-424, Ser-427–Thr-448, Lys-451–Asp-473, Asn-476–Cys-498, Asn-500–Glu-523, Lys-524–Cys-546, and Asn-548–Gln-570. Asn-96 and Asn-112 each carry an N-linked (GlcNAc...) asparagine glycan. N-linked (GlcNAc...) asparagine glycosylation is present at Asn-156. Residues Asn-212, Asn-227, and Asn-257 are each glycosylated (N-linked (GlcNAc...) asparagine). 2 N-linked (GlcNAc...) asparagine glycosylation sites follow: Asn-362 and Asn-373. A glycan (N-linked (GlcNAc...) asparagine) is linked at Asn-461. N-linked (GlcNAc...) asparagine glycosylation is found at Asn-532, Asn-558, and Asn-638. LRR repeat units follow at residues Ser-640–Met-662, Tyr-664–Leu-686, Ala-688–Ser-711, and Phe-712–Thr-734. N-linked (GlcNAc...) asparagine glycans are attached at residues Asn-722 and Asn-743. The short motif at Cys-748 to Cys-755 is the Cys pair 2 element. Residues Ile-773–Met-793 form a helical membrane-spanning segment. The Cytoplasmic portion of the chain corresponds to Ala-794–Pro-1164. Phosphothreonine is present on residues Thr-847 and Thr-855. Residues Phe-858–Val-1136 form the Protein kinase domain. ATP contacts are provided by residues Ile-864–Val-872 and Lys-886. At Tyr-931 the chain carries Phosphotyrosine. The active-site Proton acceptor is the Asp-985. Ser-1020 carries the phosphoserine modification. Phosphotyrosine is present on Tyr-1028.

Belongs to the protein kinase superfamily. Ser/Thr protein kinase family. In terms of processing, autophosphorylated on Tyr and Thr residues. Predominantly expressed in vascular tissues. Expressed only during postembryonic development with a very discrete pattern of expression, preferentially in the two protophloem cell files at the elongation zone of the root. The expression in these two cell files attenuates as the phloem cells differentiate in the upper root. In cotyledons and leaves, it is expressed in phloem cells, starting at the cotyledons and shoot apex, moving toward the basal part of the leaves, where the expression is weak. Expressed in the secondary and tertiary veins and in the upper part of the cotyledons and leaves. Weakly or not expressed in the inflorescence stems. Has some complementary expression with BRL1.

It is found in the cell membrane. It catalyses the reaction L-seryl-[protein] + ATP = O-phospho-L-seryl-[protein] + ADP + H(+). The enzyme catalyses L-threonyl-[protein] + ATP = O-phospho-L-threonyl-[protein] + ADP + H(+). It carries out the reaction L-tyrosyl-[protein] + ATP = O-phospho-L-tyrosyl-[protein] + ADP + H(+). Its function is as follows. Receptor with a dual specificity kinase activity acting on both serine/threonine- and tyrosine-containing substrates. Binds brassinolide. Regulates, in response to brassinosteroid binding, a signaling cascade involved in plant development. May be involved in cell growth and vascular differentiation. The protein is Receptor-like protein kinase BRI1-like 3 (BRL3) of Arabidopsis thaliana (Mouse-ear cress).